A 356-amino-acid polypeptide reads, in one-letter code: Terpene synthase 10 (356 aa).

Positions 90–95 (DDYLDS) match the DDxx(x)D/E motif motif. Residues 232–240 (NDAVSYAKE) carry the NDxxSxxxD/E motif motif.

It belongs to the terpene synthase family.

The enzyme catalyses geranylgeranyl diphosphate = beta-araneosene + diphosphate. Its function is as follows. Terpene synthase that converts its substrate farnesyl diphosphate (FPP) into several unidentified sesquiterpenes. TPS10 also converts geranylgeranyl diphosphate (GGPP) into the diterpene beta-araneosene. The sequence is that of Terpene synthase 10 from Dictyostelium purpureum (Slime mold).